The sequence spans 169 residues: Myelin basic protein (169 aa).

Ala-1 bears the N-acetylalanine mark. The segment at 1-114 is disordered; that stretch reads AAQKRPSQRS…GRGLSLSRFS (114 aa). The residue at position 7 (Ser-7) is a Phosphoserine; in C5 and C6. Ser-10 is subject to Phosphoserine. Tyr-12 carries the phosphotyrosine modification. The residue at position 17 (Ser-17) is a Phosphoserine. Residue Thr-18 is modified to Phosphothreonine. Citrulline; in form C8b is present on Arg-23. Position 29 is a citrulline (Arg-29). Residue Thr-33 is modified to Phosphothreonine. Ser-38 carries the post-translational modification Phosphoserine. Arg-41 carries the citrulline; alternate modification. Residue Arg-41 is modified to Omega-N-methylarginine; alternate. The segment at 43–87 is induces experimental autoimmune encephalomyelitis (EAE) 1; sequence FGSDRGAPKRGSGKDGHHAARTTHYGSLPQKAQGHRPQDENPVVH. The residue at position 47 (Arg-47) is a Citrulline; in form C8b. Residue Arg-47 is modified to Omega-N-methylarginine. Ser-54 is modified (phosphoserine; in C4, C5 and C6). The residue at position 63 (Arg-63) is a Citrulline. A Phosphothreonine modification is found at Thr-65. The residue at position 67 (Tyr-67) is a Phosphotyrosine. Thr-94 carries the phosphothreonine modification. The residue at position 96 (Arg-96) is a Citrulline; in form C2, C3, C8a and C8b. Thr-97 is subject to Phosphothreonine; by MAPK; in C3, C4, C5 and C6. Gln-102 carries the post-translational modification Deamidated glutamine; in form C5. Arg-106 bears the Citrulline; alternate mark. Arg-106 is subject to Omega-N-methylarginine; alternate. The residue at position 106 (Arg-106) is a Symmetric dimethylarginine; alternate. Citrulline is present on Arg-112. Ser-114 carries the post-translational modification Phosphoserine. Residues 114–122 are induces experimental autoimmune encephalomyelitis (EAE) 2; that stretch reads SWGAEGQKP. Gln-120 carries the post-translational modification Deamidated glutamine; in form C3. Position 121 is an N6-acetyllysine (Lys-121). Arg-129 bears the Citrulline mark. The segment at 133–169 is disordered; the sequence is YKSAHKGLKGHDAQGTLSKIFKLGGRDSRSGSPMARR. The residue at position 146 (Gln-146) is a Deamidated glutamine; in form C2. Position 158 is a citrulline (Arg-158). The residue at position 160 (Ser-160) is a Phosphoserine; in C4 and C6. Arg-161 is modified (citrulline; in form C3). Ser-164 bears the Phosphoserine; in form C3, C5 and C6 mark. 2 positions are modified to citrulline: Arg-168 and Arg-169.

The protein belongs to the myelin basic protein family. Homodimer; self-associates in the presence of lysolipid. In terms of processing, at least 6 charge isomers; C1 (the most cationic and least modified form), C2, C3, C4, C5 and C6 (the least cationic form); are produced as a result of optional post-translational modifications, such as phosphorylation of serine or threonine residues, deamidation of glutamine or asparagine residues, citrullination and methylation of arginine residues. Post-translationally, phosphorylated by TAOK2, VRK2, MAPK11, MAPK12, MAPK14 and MINK1. Proteolytically cleaved in B cell lysosomes by cathepsin CTSG which degrades the major immunogenic MBP epitope and prevents the activation of MBP-specific autoreactive T cells. As to expression, found in both the central and the peripheral nervous system.

It localises to the myelin membrane. Is, with PLP, the most abundant protein component of the myelin membrane in the CNS. Has a role in both the formation and stabilization of this compact multilayer arrangement of bilayers. Each splice variant and charge isomer may have a specialized function in the assembly of an optimized, biochemically functional myelin membrane. The protein is Myelin basic protein (MBP) of Bos taurus (Bovine).